We begin with the raw amino-acid sequence, 953 residues long: Zinc finger protein 507 (953 aa).

Serine 95 carries the post-translational modification Phosphoserine. 3 C2H2-type zinc fingers span residues 125–147 (YQCSLCKFLSSSFSVLKDHIKQH), 155–185 (LMCSECHITSRSQEELEAHVVNDHDNDANIH), and 248–270 (YRCLFCSYTCGQQRMLKTHAWKH). Phosphoserine is present on serine 427. Residues 470-489 (KGLATDENAPPGRRRTNSES) form a disordered region. C2H2-type zinc fingers lie at residues 641–663 (YRCRLCHYTSGNKGYIKQHLRVH), 669–691 (YQCPICEHIADNSKDLESHMIHH), 697–720 (YQCKQCEESFHYKSQLRNHEREQH), 758–780 (YRCDVCDYTSTTYVGVRNHRRIH), and 786–808 (YRCSLCGYVCSHPPSLKSHMWKH). A disordered region spans residues 831–891 (GRVLGKTPGK…KLSPTSNTSY (61 aa)). The span at 854 to 891 (TGSSENAVSSSELMSQTPSEVLGTNENEKLSPTSNTSY) shows a compositional bias: polar residues. The segment at 911 to 933 (FCCCICGFESTSKENLLDHMKEH) adopts a C2H2-type 9 zinc-finger fold.

It belongs to the krueppel C2H2-type zinc-finger protein family.

The protein resides in the nucleus. Functionally, may be involved in transcriptional regulation. This is Zinc finger protein 507 (ZNF507) from Pongo abelii (Sumatran orangutan).